Here is a 1070-residue protein sequence, read N- to C-terminus: DNA-directed RNA polymerase subunit beta (1070 aa).

This sequence belongs to the RNA polymerase beta chain family. In terms of assembly, in plastids the minimal PEP RNA polymerase catalytic core is composed of four subunits: alpha, beta, beta', and beta''. When a (nuclear-encoded) sigma factor is associated with the core the holoenzyme is formed, which can initiate transcription.

Its subcellular location is the plastid. The protein resides in the chloroplast. The catalysed reaction is RNA(n) + a ribonucleoside 5'-triphosphate = RNA(n+1) + diphosphate. In terms of biological role, DNA-dependent RNA polymerase catalyzes the transcription of DNA into RNA using the four ribonucleoside triphosphates as substrates. The protein is DNA-directed RNA polymerase subunit beta of Illicium oligandrum (Star anise).